A 72-amino-acid chain; its full sequence is Large ribosomal subunit protein bL31 (72 aa).

This sequence belongs to the bacterial ribosomal protein bL31 family. Type A subfamily. In terms of assembly, part of the 50S ribosomal subunit.

In terms of biological role, binds the 23S rRNA. The sequence is that of Large ribosomal subunit protein bL31 from Deinococcus geothermalis (strain DSM 11300 / CIP 105573 / AG-3a).